A 309-amino-acid polypeptide reads, in one-letter code: Porphobilinogen deaminase (309 aa).

S-(dipyrrolylmethanemethyl)cysteine is present on Cys241.

Belongs to the HMBS family. In terms of assembly, monomer. Dipyrromethane serves as cofactor.

It carries out the reaction 4 porphobilinogen + H2O = hydroxymethylbilane + 4 NH4(+). It functions in the pathway porphyrin-containing compound metabolism; protoporphyrin-IX biosynthesis; coproporphyrinogen-III from 5-aminolevulinate: step 2/4. Tetrapolymerization of the monopyrrole PBG into the hydroxymethylbilane pre-uroporphyrinogen in several discrete steps. This chain is Porphobilinogen deaminase, found in Desulforamulus reducens (strain ATCC BAA-1160 / DSM 100696 / MI-1) (Desulfotomaculum reducens).